The following is a 136-amino-acid chain: Large ribosomal subunit protein uL16 (136 aa).

Belongs to the universal ribosomal protein uL16 family. As to quaternary structure, part of the 50S ribosomal subunit.

In terms of biological role, binds 23S rRNA and is also seen to make contacts with the A and possibly P site tRNAs. The sequence is that of Large ribosomal subunit protein uL16 from Alteromonas mediterranea (strain DSM 17117 / CIP 110805 / LMG 28347 / Deep ecotype).